A 595-amino-acid chain; its full sequence is Transketolase-like protein 1 (595 aa).

A thiamine diphosphate-binding site is contributed by Gly-93 to Pro-95. Positions 125, 155, and 157 each coordinate Mg(2+). A thiamine diphosphate-binding site is contributed by Asn-155. Thiamine diphosphate is bound by residues Lys-217, Glu-339, and Phe-365. Catalysis depends on Glu-339, which acts as the Proton donor. Substrate contacts are provided by His-389 and Asp-397. His-401 serves as a coordination point for thiamine diphosphate.

Belongs to the transketolase family. As to quaternary structure, homodimer. It depends on Mg(2+) as a cofactor. Ca(2+) is required as a cofactor. Mn(2+) serves as cofactor. The cofactor is Co(2+). Requires thiamine diphosphate as cofactor. Not expressed in the embryonic neocortex.

The protein localises to the cytoplasm. It catalyses the reaction D-sedoheptulose 7-phosphate + D-glyceraldehyde 3-phosphate = aldehydo-D-ribose 5-phosphate + D-xylulose 5-phosphate. Catalyzes the transfer of a two-carbon ketol group from a ketose donor to an aldose acceptor, via a covalent intermediate with the cofactor thiamine pyrophosphate. In Mus musculus (Mouse), this protein is Transketolase-like protein 1.